Reading from the N-terminus, the 316-residue chain is Ribosomal RNA small subunit methyltransferase H (316 aa).

Residues Gly-42 to His-44, Asp-62, Phe-86, Asp-104, and Gln-111 contribute to the S-adenosyl-L-methionine site.

Belongs to the methyltransferase superfamily. RsmH family.

It localises to the cytoplasm. The enzyme catalyses cytidine(1402) in 16S rRNA + S-adenosyl-L-methionine = N(4)-methylcytidine(1402) in 16S rRNA + S-adenosyl-L-homocysteine + H(+). Specifically methylates the N4 position of cytidine in position 1402 (C1402) of 16S rRNA. This Polynucleobacter asymbioticus (strain DSM 18221 / CIP 109841 / QLW-P1DMWA-1) (Polynucleobacter necessarius subsp. asymbioticus) protein is Ribosomal RNA small subunit methyltransferase H.